The primary structure comprises 309 residues: Glutaminase (309 aa).

Serine 64, asparagine 114, glutamate 160, asparagine 167, tyrosine 191, tyrosine 243, and valine 261 together coordinate substrate.

The protein belongs to the glutaminase family. As to quaternary structure, homotetramer.

The enzyme catalyses L-glutamine + H2O = L-glutamate + NH4(+). In Rhodopseudomonas palustris (strain BisB18), this protein is Glutaminase.